Here is a 416-residue protein sequence, read N- to C-terminus: Thyroid hormone receptor alpha (416 aa).

Over residues 1–13 (MEPMSNKQDSNSS) the composition is skewed to polar residues. The interval 1–37 (MEPMSNKQDSNSSEGDEKGWPDVPKRKRKNSQCSMKS) is disordered. Residues 1 to 58 (MEPMSNKQDSNSSEGDEKGWPDVPKRKRKNSQCSMKSMSALSVSVPGYIPSYLEKDEP) form a modulating region. Basic and acidic residues predominate over residues 15 to 24 (GDEKGWPDVP). Positions 59, 62, 76, 79, 97, 103, 113, and 116 each coordinate Zn(2+). 2 consecutive NR C4-type zinc fingers follow at residues 59-79 (CVVC…CEGC) and 97-121 (CKYE…FKKC). The segment at residues 59-133 (CVVCGDKATG…VGMAMDLVLD (75 aa)) is a DNA-binding region (nuclear receptor). In terms of domain architecture, NR LBD spans 169 to 413 (AEWELIRMAT…PPLFLEVFED (245 aa)). R234 serves as a coordination point for 3,3',5-triiodo-L-thyronine.

It belongs to the nuclear hormone receptor family. NR1 subfamily.

The protein localises to the nucleus. In terms of biological role, nuclear hormone receptor that can act as a repressor or activator of transcription. High affinity receptor for thyroid hormones, including triiodothyronine and thyroxine. The protein is Thyroid hormone receptor alpha (thra) of Hippoglossus hippoglossus (Atlantic halibut).